The sequence spans 174 residues: Crossover junction endodeoxyribonuclease RuvC (174 aa).

Residues D8, E69, and D141 contribute to the active site. Mg(2+)-binding residues include D8, E69, and D141.

The protein belongs to the RuvC family. In terms of assembly, homodimer which binds Holliday junction (HJ) DNA. The HJ becomes 2-fold symmetrical on binding to RuvC with unstacked arms; it has a different conformation from HJ DNA in complex with RuvA. In the full resolvosome a probable DNA-RuvA(4)-RuvB(12)-RuvC(2) complex forms which resolves the HJ. Requires Mg(2+) as cofactor.

The protein localises to the cytoplasm. The enzyme catalyses Endonucleolytic cleavage at a junction such as a reciprocal single-stranded crossover between two homologous DNA duplexes (Holliday junction).. In terms of biological role, the RuvA-RuvB-RuvC complex processes Holliday junction (HJ) DNA during genetic recombination and DNA repair. Endonuclease that resolves HJ intermediates. Cleaves cruciform DNA by making single-stranded nicks across the HJ at symmetrical positions within the homologous arms, yielding a 5'-phosphate and a 3'-hydroxyl group; requires a central core of homology in the junction. The consensus cleavage sequence is 5'-(A/T)TT(C/G)-3'. Cleavage occurs on the 3'-side of the TT dinucleotide at the point of strand exchange. HJ branch migration catalyzed by RuvA-RuvB allows RuvC to scan DNA until it finds its consensus sequence, where it cleaves and resolves the cruciform DNA. The chain is Crossover junction endodeoxyribonuclease RuvC from Xanthomonas axonopodis pv. citri (strain 306).